Here is an 87-residue protein sequence, read N- to C-terminus: Large ribosomal subunit protein bL27 (87 aa).

A disordered region spans residues 1–21 (MAHKKAGGSSRNGRDSESKRL).

This sequence belongs to the bacterial ribosomal protein bL27 family.

This Paraburkholderia xenovorans (strain LB400) protein is Large ribosomal subunit protein bL27.